The sequence spans 491 residues: Cytochrome P450 81F2 (491 aa).

Residues 283 to 303 traverse the membrane as a helical segment; that stretch reads VIIKGLMLSMMLAGTDTAAVT. Cysteine 429 lines the heme pocket.

This sequence belongs to the cytochrome P450 family. Requires heme as cofactor.

It localises to the membrane. It functions in the pathway secondary metabolite biosynthesis. Functionally, involved in indole glucosinolate biosynthesis. Catalyzes hydroxylation reactions of the glucosinolate indole ring. Converts indol-3-yl-methylglucosinolate (I3M) to 4-hydroxy-indol-3-yl-methylglucosinolate (4OH-I3M) and/or 1-hydroxy-indol-3-yl-methylglucosinolate (1OH-I3M) intermediates. These hydroxy intermediates are converted to 4-methoxy-indol-3-yl-methylglucosinolate (4MO-I3M) and 1-methoxy-indol-3-yl-methylglucosinolate (1MO-I3M) by indole glucosinolate methyltransferase 1 and 2 (IGMT1 and IGMT2). Contributes to defense against the green peach aphid (Myzus persicae), a generalist phloem-feeding herbivore. Required for the biosynthesis of antifungal indole glucosinolate metabolites. Required for the pathogen-induced accumulation of 4MO-I3M, which in turn is activated by the atypical BGLU26/PEN2 myrosinase. Required for the biosynthesis of Trp-derived antifungal compounds and non-host resistance to the necrotrophic fungal pathogen Plectosphaerella cucumerina. Required for resistance to the non-adapted fungal pathogen Colletotrichum gloeosporioides. This Arabidopsis thaliana (Mouse-ear cress) protein is Cytochrome P450 81F2.